A 276-amino-acid polypeptide reads, in one-letter code: D-apionate oxidoisomerase (276 aa).

NAD(+) is bound by residues 12 to 14, E33, and D69; that span reads GKM. H114 and E184 together coordinate Zn(2+).

The protein belongs to the ApnO family. It depends on Zn(2+) as a cofactor.

It carries out the reaction D-apionate + NAD(+) = 3-oxoisoapionate + NADH + H(+). It participates in carbohydrate metabolism. In terms of biological role, involved in catabolism of D-apiose. Catalyzes the conversion of D-apionate to 3-oxo-isoapionate. The protein is D-apionate oxidoisomerase of Cupriavidus necator (strain ATCC 43291 / DSM 13513 / CCUG 52238 / LMG 8453 / N-1) (Ralstonia eutropha).